The chain runs to 537 residues: 4-coumarate--CoA ligase (537 aa).

ATP-binding residues include Ser-189, Ser-190, Gly-191, Thr-192, Thr-193, and Lys-197. Positions 239 and 243 each coordinate (E)-4-coumaroyl-AMP. Lys-260 lines the CoA pocket. Residues 262 to 331 (NLTTCLELIQ…ERFPKAIFGQ (70 aa)) are SBD1. (E)-4-coumaroyl-AMP contacts are provided by Ala-309, Gln-331, Gly-332, Thr-336, and Met-344. Positions 331, 332, and 336 each coordinate ATP. Residues 332-399 (GYGMTEAGPV…IRGPEIMKGY (68 aa)) are SBD2. 2 residues coordinate ATP: Asp-420 and Arg-435. Positions 437 and 441 each coordinate (E)-4-coumaroyl-AMP. The CoA site is built by Lys-443 and Gly-444. Lys-524 contacts ATP.

Belongs to the ATP-dependent AMP-binding enzyme family. Requires Mg(2+) as cofactor.

It catalyses the reaction (E)-4-coumarate + ATP + CoA = (E)-4-coumaroyl-CoA + AMP + diphosphate. It carries out the reaction (E)-4-coumarate + ATP + H(+) = (E)-4-coumaroyl-AMP + diphosphate. The catalysed reaction is (E)-4-coumaroyl-AMP + CoA = (E)-4-coumaroyl-CoA + AMP + H(+). It participates in phytoalexin biosynthesis; 3,4',5-trihydroxystilbene biosynthesis; 3,4',5-trihydroxystilbene from trans-4-coumarate: step 1/2. Functionally, carboxylate--CoA ligase that may use 4-coumarate as substrate. Follows a two-step reaction mechanism, wherein the carboxylate substrate first undergoes adenylation by ATP, followed by a thioesterification in the presence of CoA to yield the final CoA thioester. The protein is 4-coumarate--CoA ligase (4CL) of Pinus taeda (Loblolly pine).